The primary structure comprises 406 residues: Tryptophan 2,3-dioxygenase (406 aa).

Substrate is bound by residues 72–76 (FIVTH) and arginine 144. Histidine 328 is a binding site for heme. Residue threonine 342 coordinates substrate.

It belongs to the tryptophan 2,3-dioxygenase family. Homotetramer. Dimer of dimers. Heme serves as cofactor.

The enzyme catalyses L-tryptophan + O2 = N-formyl-L-kynurenine. It functions in the pathway amino-acid degradation; L-tryptophan degradation via kynurenine pathway; L-kynurenine from L-tryptophan: step 1/2. Its function is as follows. Heme-dependent dioxygenase that catalyzes the oxidative cleavage of the L-tryptophan (L-Trp) pyrrole ring and converts L-tryptophan to N-formyl-L-kynurenine. Catalyzes the oxidative cleavage of the indole moiety. This chain is Tryptophan 2,3-dioxygenase, found in Xenopus laevis (African clawed frog).